The primary structure comprises 838 residues: Serine/threonine-protein phosphatase 4 regulatory subunit 3 (838 aa).

2 disordered regions span residues 452–482 and 745–838; these read NNCNGNSAVKAGESNGAESPIAPPGSRSPSR and AINK…SESS. Positions 747 to 761 are enriched in polar residues; that stretch reads NKQQDNNGERNTTTG. Acidic residues predominate over residues 783-792; sequence SDGENNENNE.

As to quaternary structure, regulatory subunit 3 (R3) of the histone H2A phosphatase complex (HTP-C) consisting of PPH3, PSY2 and PSY4.

The protein localises to the nucleus. In terms of biological role, core regulatory subunit of the histone H2A phosphatase complex, which dephosphorylates H2AS128ph (gamma-H2A) that has been displaced from sites of DNA lesions in the double-stranded DNA break repair process. Dephosphorylation is necessary for efficient recovery from the DNA damage checkpoint. This Eremothecium gossypii (strain ATCC 10895 / CBS 109.51 / FGSC 9923 / NRRL Y-1056) (Yeast) protein is Serine/threonine-protein phosphatase 4 regulatory subunit 3 (PSY2).